The following is a 1365-amino-acid chain: Transcription elongation factor spt6 (1365 aa).

Residues 1–14 (MSENEVVGSPTTNG) are compositionally biased toward polar residues. Disordered regions lie at residues 1–165 (MSEN…QGHR) and 181–202 (FEDE…SVRP). A compositionally biased stretch (low complexity) spans 24–33 (ENGEGTNVDD). Acidic residues-rich tracts occupy residues 47–64 (NDND…DEEA), 73–82 (IVEDEEDEVP), 102–111 (DMLDEEDLEL), and 136–156 (ETLE…VDDE). Thr-137 carries the post-translational modification Phosphothreonine. Residue Ser-143 is modified to Phosphoserine. Phosphoserine is present on Ser-454. Residues 1050 to 1118 (DAIVPVNVRR…ANFMVDLSLR (69 aa)) form the S1 motif domain. The segment covering 1124–1139 (SANSKRQTSSHRTSYW) has biased composition (polar residues). Positions 1124–1146 (SANSKRQTSSHRTSYWDTEAEKR) are disordered. The region spanning 1167 to 1262 (HPLFKDLNAS…IVLHIKAIAK (96 aa)) is the SH2 domain.

The protein belongs to the SPT6 family.

It localises to the nucleus. The protein localises to the chromosome. Histone H3-H4 chaperone that plays a role in maintenance of chromatin structure during RNA polymerase II transcription elongation thereby repressing transcription initiation from cryptic promoters. Mediates the reassembly of nucleosomes onto the promoters of at least a selected set of genes during repression; the nucleosome reassembly is essential for transcriptional repression. This Schizosaccharomyces pombe (strain 972 / ATCC 24843) (Fission yeast) protein is Transcription elongation factor spt6 (spt6).